Reading from the N-terminus, the 440-residue chain is Cysteine proteinase (440 aa).

Residues 1-60 (MYSSSVVSNPNERLVNNRVENDLESSDDTLSTQAKPVSRLLTRKLLLGVVVLFFLAGVSV) form the signal peptide. The propeptide at 61 to 229 (VSYFLFSKYK…DEDVDLAKLT (169 aa)) is activation peptide. Residues 166–182 (VKGINRFSDLTEREFYK) form an involved in processing to yield active enzymes region. N-linked (GlcNAc...) asparagine glycosylation is present at asparagine 206. Cysteine 250 and cysteine 291 are joined by a disulfide. Residues cysteine 253, histidine 382, and asparagine 404 contribute to the active site.

Belongs to the peptidase C1 family.

This Theileria parva (East coast fever infection agent) protein is Cysteine proteinase.